The chain runs to 216 residues: UPF0502 protein VPA1223 (216 aa).

The protein belongs to the UPF0502 family.

This is UPF0502 protein VPA1223 from Vibrio parahaemolyticus serotype O3:K6 (strain RIMD 2210633).